The chain runs to 279 residues: Undecaprenyl-diphosphatase (279 aa).

7 consecutive transmembrane segments (helical) span residues 10–30, 48–68, 96–116, 128–148, 203–223, 229–249, and 259–279; these read FICF…FLPI, LGVS…IYYF, LFLY…LIKL, GLFS…LSEI, SFLV…FSLF, IDII…IFAI, and NNTL…LTTL.

It belongs to the UppP family.

The protein localises to the cell inner membrane. The catalysed reaction is di-trans,octa-cis-undecaprenyl diphosphate + H2O = di-trans,octa-cis-undecaprenyl phosphate + phosphate + H(+). Catalyzes the dephosphorylation of undecaprenyl diphosphate (UPP). Confers resistance to bacitracin. The polypeptide is Undecaprenyl-diphosphatase (Prochlorococcus marinus (strain NATL2A)).